A 448-amino-acid polypeptide reads, in one-letter code: uncharacterized protein (448 aa).

Residues 187–198 (SKGDRGDADDRG) show a composition bias toward basic and acidic residues. Disordered regions lie at residues 187–221 (SKGD…LPTR), 243–270 (LQVP…GATM), and 291–361 (LSGL…LPNG). Residues 243–261 (LQVPGGTSAAIPSASSTPS) show a composition bias toward low complexity. The span at 307 to 334 (FDERGQEVRDPADYEHANEPDERRADDR) shows a compositional bias: basic and acidic residues.

To M.tuberculosis Rv0025 and Rv0739.

This is an uncharacterized protein from Mycobacterium tuberculosis (strain CDC 1551 / Oshkosh).